Reading from the N-terminus, the 55-residue chain is TGB2 protein (55 aa).

Residues 20 to 39 (NAAFAVVLLLSLLIYGSRCL) form a helical membrane-spanning segment.

This sequence belongs to the carlavirus/potexvirus TGB2 protein family.

The protein resides in the host membrane. In terms of biological role, the three proteins TGB1, TGB2 and TGB3 are required for virus movement. The chain is TGB2 protein from Potato virus X (strain Xc) (PVX).